The following is a 48-amino-acid chain: MLGRTKLGNRNAQANNNAKKKNGFQTHFDSYAGREAEKLIASNKRHND.

A disordered region spans residues 1-30; it reads MLGRTKLGNRNAQANNNAKKKNGFQTHFDS.

This is an uncharacterized protein from Bacillus subtilis (strain 168).